A 391-amino-acid polypeptide reads, in one-letter code: GATA-binding factor 6-A (391 aa).

The tract at residues 57–111 (GAHSVNSHWSQATSESSSFNNSSPHTSSRYHYPPSPPMHNGSTRDTGYSSSLTVS) is disordered. The span at 66–83 (SQATSESSSFNNSSPHTS) shows a compositional bias: low complexity. A compositionally biased stretch (polar residues) spans 96-111 (NGSTRDTGYSSSLTVS). 2 GATA-type zinc fingers span residues 182-206 (CVNC…CNAC) and 236-260 (CANC…CNAC). The tract at residues 274-355 (AMKKEGIQTR…TESTSPNSNT (82 aa)) is disordered. Positions 282–291 (TRKRKPKTLN) are enriched in basic residues. Over residues 292–319 (KSKSSSSNGNSSHQISMTPTSTTSSTNS) the composition is skewed to low complexity. The segment covering 326 to 355 (GSPSQNTTPVVASSLMSTQQTESTSPNSNT) has biased composition (polar residues).

As to expression, in embryos, expressed in the presumptive heart mesoderm. In adults, expressed at high levels in heart, small intestine, and stomach and at lower levels in lung, pancreas and colon.

The protein localises to the nucleus. Transcriptional activator that binds 5'-GATA-3'-containing motifs within gene promoters. Regulates cardiac-specific transcription during embryogenesis and thereby cardiogenesis. The sequence is that of GATA-binding factor 6-A (gata6-a) from Xenopus laevis (African clawed frog).